A 168-amino-acid chain; its full sequence is 6-pyruvoyl tetrahydrobiopterin synthase (168 aa).

Histidine 19 contacts Zn(2+). The active-site Proton acceptor is the cysteine 38. Positions 44 and 46 each coordinate Zn(2+). Residues histidine 85 and glutamate 130 each act as charge relay system in the active site. At serine 159 the chain carries Phosphoserine. Threonine 161 carries the phosphothreonine modification. Phosphoserine is present on residues serine 164, serine 165, and serine 167.

Belongs to the PTPS family. As to quaternary structure, homohexamer formed of two homotrimers in a head to head fashion. Zn(2+) serves as cofactor.

It carries out the reaction 7,8-dihydroneopterin 3'-triphosphate = 6-pyruvoyl-5,6,7,8-tetrahydropterin + triphosphate + H(+). It functions in the pathway cofactor biosynthesis; tetrahydrobiopterin biosynthesis; tetrahydrobiopterin from 7,8-dihydroneopterin triphosphate: step 1/3. Its function is as follows. Required for pigment and biopterin synthesis. The polypeptide is 6-pyruvoyl tetrahydrobiopterin synthase (pr) (Drosophila melanogaster (Fruit fly)).